The following is a 129-amino-acid chain: Glycine cleavage system H protein (129 aa).

The Lipoyl-binding domain maps to 24–106; it reads LLKIGVSEFA…IGEGWLVILK (83 aa). Position 65 is an N6-lipoyllysine (Lys-65).

The protein belongs to the GcvH family. In terms of assembly, the glycine cleavage system is composed of four proteins: P, T, L and H. (R)-lipoate serves as cofactor.

In terms of biological role, the glycine cleavage system catalyzes the degradation of glycine. The H protein shuttles the methylamine group of glycine from the P protein to the T protein. The sequence is that of Glycine cleavage system H protein from Prochlorococcus marinus (strain AS9601).